Reading from the N-terminus, the 435-residue chain is Adenylosuccinate synthetase (435 aa).

GTP-binding positions include 22–28 (GDEGKGK) and 50–52 (GHT). Catalysis depends on aspartate 23, which acts as the Proton acceptor. Residues aspartate 23 and glycine 50 each coordinate Mg(2+). Residues 23–26 (DEGK), 48–51 (NAGH), threonine 140, arginine 154, glutamine 235, threonine 250, and arginine 314 contribute to the IMP site. Residue histidine 51 is the Proton donor of the active site. 310 to 316 (ATTGRKR) is a binding site for substrate. GTP is bound by residues arginine 316, 342–344 (KLD), and 424–426 (SVG).

This sequence belongs to the adenylosuccinate synthetase family. In terms of assembly, homodimer. The cofactor is Mg(2+).

The protein resides in the cytoplasm. It catalyses the reaction IMP + L-aspartate + GTP = N(6)-(1,2-dicarboxyethyl)-AMP + GDP + phosphate + 2 H(+). Its pathway is purine metabolism; AMP biosynthesis via de novo pathway; AMP from IMP: step 1/2. In terms of biological role, plays an important role in the de novo pathway of purine nucleotide biosynthesis. Catalyzes the first committed step in the biosynthesis of AMP from IMP. In Chlorobaculum parvum (strain DSM 263 / NCIMB 8327) (Chlorobium vibrioforme subsp. thiosulfatophilum), this protein is Adenylosuccinate synthetase.